Here is a 244-residue protein sequence, read N- to C-terminus: Small ribosomal subunit protein uS3 (244 aa).

In terms of domain architecture, KH type-2 spans 39-110 (IRNFIQKKYS…QVRINVVEVE (72 aa)). The segment at 221-244 (GAIPRRKGSRKPQQFEDRSSNENS) is disordered. Residues 233–244 (QQFEDRSSNENS) are compositionally biased toward basic and acidic residues.

It belongs to the universal ribosomal protein uS3 family. As to quaternary structure, part of the 30S ribosomal subunit. Forms a tight complex with proteins S10 and S14.

Binds the lower part of the 30S subunit head. Binds mRNA in the 70S ribosome, positioning it for translation. The chain is Small ribosomal subunit protein uS3 from Prochlorococcus marinus (strain MIT 9515).